A 418-amino-acid chain; its full sequence is Bifunctional enzyme IspD/IspF (418 aa).

The 2-C-methyl-D-erythritol 4-phosphate cytidylyltransferase stretch occupies residues 1 to 261; that stretch reads MADTPALIPQ…EFKRASDMNF (261 aa). The segment at 262 to 418 is 2-C-methyl-D-erythritol 2,4-cyclodiphosphate synthase; that stretch reads RIGEGWDIHA…RATVLLRKFI (157 aa). A divalent metal cation is bound by residues Asp-268 and His-270. 4-CDP-2-C-methyl-D-erythritol 2-phosphate-binding positions include 268–270 and 294–295; these read DIH and HS. His-302 serves as a coordination point for a divalent metal cation. 4-CDP-2-C-methyl-D-erythritol 2-phosphate-binding positions include 316-318 and 321-325; these read DIG and FPDTD.

The protein in the N-terminal section; belongs to the IspD/TarI cytidylyltransferase family. IspD subfamily. In the C-terminal section; belongs to the IspF family. A divalent metal cation is required as a cofactor.

It carries out the reaction 2-C-methyl-D-erythritol 4-phosphate + CTP + H(+) = 4-CDP-2-C-methyl-D-erythritol + diphosphate. It catalyses the reaction 4-CDP-2-C-methyl-D-erythritol 2-phosphate = 2-C-methyl-D-erythritol 2,4-cyclic diphosphate + CMP. The protein operates within isoprenoid biosynthesis; isopentenyl diphosphate biosynthesis via DXP pathway; isopentenyl diphosphate from 1-deoxy-D-xylulose 5-phosphate: step 2/6. Its pathway is isoprenoid biosynthesis; isopentenyl diphosphate biosynthesis via DXP pathway; isopentenyl diphosphate from 1-deoxy-D-xylulose 5-phosphate: step 4/6. Its function is as follows. Bifunctional enzyme that catalyzes the formation of 4-diphosphocytidyl-2-C-methyl-D-erythritol from CTP and 2-C-methyl-D-erythritol 4-phosphate (MEP) (IspD), and catalyzes the conversion of 4-diphosphocytidyl-2-C-methyl-D-erythritol 2-phosphate (CDP-ME2P) to 2-C-methyl-D-erythritol 2,4-cyclodiphosphate (ME-CPP) with a corresponding release of cytidine 5-monophosphate (CMP) (IspF). This chain is Bifunctional enzyme IspD/IspF, found in Albidiferax ferrireducens (strain ATCC BAA-621 / DSM 15236 / T118) (Rhodoferax ferrireducens).